We begin with the raw amino-acid sequence, 225 residues long: NAD(P)H-quinone oxidoreductase subunit K, chloroplastic (225 aa).

[4Fe-4S] cluster is bound by residues cysteine 43, cysteine 44, cysteine 108, and cysteine 139.

This sequence belongs to the complex I 20 kDa subunit family. NDH is composed of at least 16 different subunits, 5 of which are encoded in the nucleus. It depends on [4Fe-4S] cluster as a cofactor.

Its subcellular location is the plastid. It is found in the chloroplast thylakoid membrane. It catalyses the reaction a plastoquinone + NADH + (n+1) H(+)(in) = a plastoquinol + NAD(+) + n H(+)(out). The enzyme catalyses a plastoquinone + NADPH + (n+1) H(+)(in) = a plastoquinol + NADP(+) + n H(+)(out). NDH shuttles electrons from NAD(P)H:plastoquinone, via FMN and iron-sulfur (Fe-S) centers, to quinones in the photosynthetic chain and possibly in a chloroplast respiratory chain. The immediate electron acceptor for the enzyme in this species is believed to be plastoquinone. Couples the redox reaction to proton translocation, and thus conserves the redox energy in a proton gradient. The protein is NAD(P)H-quinone oxidoreductase subunit K, chloroplastic of Manihot esculenta (Cassava).